Here is a 526-residue protein sequence, read N- to C-terminus: Peptide chain release factor 3 (526 aa).

In terms of domain architecture, tr-type G spans 9 to 277 (DKRRTFAIIS…GIVEWAPKPQ (269 aa)). GTP-binding positions include 18–25 (SHPDAGKT), 86–90 (DTPGH), and 140–143 (NKLD).

This sequence belongs to the TRAFAC class translation factor GTPase superfamily. Classic translation factor GTPase family. PrfC subfamily.

The protein resides in the cytoplasm. Functionally, increases the formation of ribosomal termination complexes and stimulates activities of RF-1 and RF-2. It binds guanine nucleotides and has strong preference for UGA stop codons. It may interact directly with the ribosome. The stimulation of RF-1 and RF-2 is significantly reduced by GTP and GDP, but not by GMP. The protein is Peptide chain release factor 3 of Shewanella woodyi (strain ATCC 51908 / MS32).